The sequence spans 77 residues: Acyl carrier protein (77 aa).

The 76-residue stretch at 1–76 folds into the Carrier domain; the sequence is MAVFDEVKDV…DVVNYIDGLK (76 aa). At Ser-36 the chain carries O-(pantetheine 4'-phosphoryl)serine.

Belongs to the acyl carrier protein (ACP) family. In terms of processing, 4'-phosphopantetheine is transferred from CoA to a specific serine of apo-ACP by AcpS. This modification is essential for activity because fatty acids are bound in thioester linkage to the sulfhydryl of the prosthetic group.

It is found in the cytoplasm. The protein operates within lipid metabolism; fatty acid biosynthesis. Its function is as follows. Carrier of the growing fatty acid chain in fatty acid biosynthesis. This is Acyl carrier protein from Campylobacter fetus subsp. fetus (strain 82-40).